A 109-amino-acid chain; its full sequence is Putative pterin-4-alpha-carbinolamine dehydratase (109 aa).

Belongs to the pterin-4-alpha-carbinolamine dehydratase family.

It catalyses the reaction (4aS,6R)-4a-hydroxy-L-erythro-5,6,7,8-tetrahydrobiopterin = (6R)-L-erythro-6,7-dihydrobiopterin + H2O. The sequence is that of Putative pterin-4-alpha-carbinolamine dehydratase from Vibrio cholerae serotype O1 (strain ATCC 39315 / El Tor Inaba N16961).